The sequence spans 196 residues: Adenylate kinase (196 aa).

9–17 (GIPGVGKST) is a binding site for ATP.

Belongs to the archaeal adenylate kinase family.

Its subcellular location is the cytoplasm. It carries out the reaction AMP + ATP = 2 ADP. The polypeptide is Adenylate kinase (adkA) (Pyrococcus horikoshii (strain ATCC 700860 / DSM 12428 / JCM 9974 / NBRC 100139 / OT-3)).